The chain runs to 69 residues: Putative membrane protein insertion efficiency factor (69 aa).

Belongs to the UPF0161 family.

It is found in the cell membrane. In terms of biological role, could be involved in insertion of integral membrane proteins into the membrane. The polypeptide is Putative membrane protein insertion efficiency factor (Clostridium botulinum (strain Okra / Type B1)).